Reading from the N-terminus, the 399-residue chain is S-adenosylmethionine synthase (399 aa).

Histidine 15 contributes to the ATP binding site. Aspartate 17 contacts Mg(2+). A K(+)-binding site is contributed by glutamate 43. L-methionine-binding residues include glutamate 56 and glutamine 99. The tract at residues 99–109 (QSADIAQGVDN) is flexible loop. ATP is bound by residues 174–176 (DGK), 244–245 (RF), aspartate 253, 259–260 (RK), alanine 276, and lysine 280. Aspartate 253 contributes to the L-methionine binding site. Lysine 284 provides a ligand contact to L-methionine.

The protein belongs to the AdoMet synthase family. As to quaternary structure, homotetramer; dimer of dimers. Mg(2+) serves as cofactor. K(+) is required as a cofactor.

It is found in the cytoplasm. It carries out the reaction L-methionine + ATP + H2O = S-adenosyl-L-methionine + phosphate + diphosphate. It participates in amino-acid biosynthesis; S-adenosyl-L-methionine biosynthesis; S-adenosyl-L-methionine from L-methionine: step 1/1. Catalyzes the formation of S-adenosylmethionine (AdoMet) from methionine and ATP. The overall synthetic reaction is composed of two sequential steps, AdoMet formation and the subsequent tripolyphosphate hydrolysis which occurs prior to release of AdoMet from the enzyme. This chain is S-adenosylmethionine synthase, found in Salinispora tropica (strain ATCC BAA-916 / DSM 44818 / JCM 13857 / NBRC 105044 / CNB-440).